The chain runs to 455 residues: Ribulose bisphosphate carboxylase large chain (455 aa).

At lysine 5 the chain carries N6,N6,N6-trimethyllysine. Positions 114 and 164 each coordinate substrate. Residue lysine 166 is the Proton acceptor of the active site. Position 168 (lysine 168) interacts with substrate. The Mg(2+) site is built by lysine 192, aspartate 194, and glutamate 195. Position 192 is an N6-carboxylysine (lysine 192). Histidine 285 (proton acceptor) is an active-site residue. Residues arginine 286, histidine 318, and serine 370 each contribute to the substrate site.

The protein belongs to the RuBisCO large chain family. Type I subfamily. In terms of assembly, heterohexadecamer of 8 large chains and 8 small chains; disulfide-linked. The disulfide link is formed within the large subunit homodimers. It depends on Mg(2+) as a cofactor. In terms of processing, the disulfide bond which can form in the large chain dimeric partners within the hexadecamer appears to be associated with oxidative stress and protein turnover.

The protein localises to the plastid. The protein resides in the chloroplast. It catalyses the reaction 2 (2R)-3-phosphoglycerate + 2 H(+) = D-ribulose 1,5-bisphosphate + CO2 + H2O. It carries out the reaction D-ribulose 1,5-bisphosphate + O2 = 2-phosphoglycolate + (2R)-3-phosphoglycerate + 2 H(+). RuBisCO catalyzes two reactions: the carboxylation of D-ribulose 1,5-bisphosphate, the primary event in carbon dioxide fixation, as well as the oxidative fragmentation of the pentose substrate in the photorespiration process. Both reactions occur simultaneously and in competition at the same active site. In Lupinus albus (White lupine), this protein is Ribulose bisphosphate carboxylase large chain.